The primary structure comprises 128 residues: Nitrogen fixation nifHD region GlnB-like protein 2 (128 aa).

Belongs to the P(II) protein family.

In terms of biological role, could be involved in the regulation of nitrogen fixation. This Methanothermococcus thermolithotrophicus (Methanococcus thermolithotrophicus) protein is Nitrogen fixation nifHD region GlnB-like protein 2 (glnBB).